The chain runs to 164 residues: Lipoprotein signal peptidase (164 aa).

The next 2 membrane-spanning stretches (helical) occupy residues 68–88 (TILV…LWNA) and 96–116 (FWGL…RAMF). Active-site residues include Asp-121 and Asp-139. Residues 134–154 (TFNVADSAIVVGSCLLLIDLL) form a helical membrane-spanning segment.

Belongs to the peptidase A8 family.

Its subcellular location is the cell inner membrane. It catalyses the reaction Release of signal peptides from bacterial membrane prolipoproteins. Hydrolyzes -Xaa-Yaa-Zaa-|-(S,diacylglyceryl)Cys-, in which Xaa is hydrophobic (preferably Leu), and Yaa (Ala or Ser) and Zaa (Gly or Ala) have small, neutral side chains.. The protein operates within protein modification; lipoprotein biosynthesis (signal peptide cleavage). In terms of biological role, this protein specifically catalyzes the removal of signal peptides from prolipoproteins. The chain is Lipoprotein signal peptidase from Solibacter usitatus (strain Ellin6076).